Here is a 361-residue protein sequence, read N- to C-terminus: Eukaryotic translation initiation factor 3 subunit F (361 aa).

Composition is skewed to low complexity over residues 1 to 11 and 21 to 42; these read MATPVVSASGP and AAPASASASVPAPTPAPAAAAV. The segment at 1–42 is disordered; that stretch reads MATPVVSASGPPATPAPAPVAAPASASASVPAPTPAPAAAAV. Ala2 is modified (N-acetylalanine). Phosphoserine; by CDK11; in vitro is present on Ser50. Positions 55-78 are enriched in low complexity; that stretch reads AAAATTAAPGQTPASAQAPAQTPA. The interval 55–86 is disordered; it reads AAAATTAAPGQTPASAQAPAQTPAPALPGPAL. Residues 96–226 enclose the MPN domain; it reads VRLHPVILAS…IKAYVSTLMG (131 aa). Lys242 bears the N6-acetyllysine mark. Position 262 is a phosphoserine (Ser262).

It belongs to the eIF-3 subunit F family. In terms of assembly, component of the eukaryotic translation initiation factor 3 (eIF-3) complex, which is composed of 13 subunits: EIF3A, EIF3B, EIF3C, EIF3D, EIF3E, EIF3F, EIF3G, EIF3H, EIF3I, EIF3J, EIF3K, EIF3L and EIF3M. The eIF-3 complex appears to include 3 stable modules: module A is composed of EIF3A, EIF3B, EIF3G and EIF3I; module B is composed of EIF3F, EIF3H, and EIF3M; and module C is composed of EIF3C, EIF3D, EIF3E, EIF3K and EIF3L. EIF3C of module C binds EIF3B of module A and EIF3H of module B, thereby linking the three modules. EIF3J is a labile subunit that binds to the eIF-3 complex via EIF3B. The eIF-3 complex interacts with RPS6KB1 under conditions of nutrient depletion. Mitogenic stimulation leads to binding and activation of a complex composed of MTOR and RPTOR, leading to phosphorylation and release of RPS6KB1 and binding of EIF4B to eIF-3. Interacts with RNF139; the interaction leads to protein translation inhibitions in a ubiquitination-dependent manner. Interacts with DTX1, the interaction is required for deubiquitinating activity towards NOTCH1. Phosphorylation is enhanced upon serum stimulation. Phosphorylated during apoptosis by caspase-processed CDK11.

Its subcellular location is the cytoplasm. The catalysed reaction is Thiol-dependent hydrolysis of ester, thioester, amide, peptide and isopeptide bonds formed by the C-terminal Gly of ubiquitin (a 76-residue protein attached to proteins as an intracellular targeting signal).. In terms of biological role, component of the eukaryotic translation initiation factor 3 (eIF-3) complex, which is required for several steps in the initiation of protein synthesis. The eIF-3 complex associates with the 40S ribosome and facilitates the recruitment of eIF-1, eIF-1A, eIF-2:GTP:methionyl-tRNAi and eIF-5 to form the 43S pre-initiation complex (43S PIC). The eIF-3 complex stimulates mRNA recruitment to the 43S PIC and scanning of the mRNA for AUG recognition. The eIF-3 complex is also required for disassembly and recycling of post-termination ribosomal complexes and subsequently prevents premature joining of the 40S and 60S ribosomal subunits prior to initiation. The eIF-3 complex specifically targets and initiates translation of a subset of mRNAs involved in cell proliferation, including cell cycling, differentiation and apoptosis, and uses different modes of RNA stem-loop binding to exert either translational activation or repression. Its function is as follows. Deubiquitinates activated NOTCH1, promoting its nuclear import, thereby acting as a positive regulator of Notch signaling. The protein is Eukaryotic translation initiation factor 3 subunit F of Macaca fascicularis (Crab-eating macaque).